Reading from the N-terminus, the 353-residue chain is Probable butyrate kinase (353 aa).

The protein belongs to the acetokinase family.

It is found in the cytoplasm. The catalysed reaction is butanoate + ATP = butanoyl phosphate + ADP. This chain is Probable butyrate kinase, found in Bacteroides thetaiotaomicron (strain ATCC 29148 / DSM 2079 / JCM 5827 / CCUG 10774 / NCTC 10582 / VPI-5482 / E50).